The following is a 61-amino-acid chain: Three-finger hemachatoxin (61 aa).

4 disulfide bridges follow: Cys-3–Cys-22, Cys-15–Cys-39, Cys-43–Cys-54, and Cys-55–Cys-60.

Belongs to the three-finger toxin family. Short-chain subfamily. Type IB cytotoxin sub-subfamily. In terms of tissue distribution, expressed by the venom gland.

Its subcellular location is the secreted. Its function is as follows. This protein lyses red blood cells and has cardiotoxic and hypotensive activities. The protein is Three-finger hemachatoxin of Hemachatus haemachatus (Rinkhals).